Here is a 399-residue protein sequence, read N- to C-terminus: Phosphoglycerate kinase (399 aa).

Substrate is bound by residues 20–22 (DFN), R35, 58–61 (HLGR), R117, and R154. ATP-binding positions include K204, G295, E326, and 355 to 358 (GGDS).

Belongs to the phosphoglycerate kinase family. In terms of assembly, monomer.

The protein localises to the cytoplasm. The catalysed reaction is (2R)-3-phosphoglycerate + ATP = (2R)-3-phospho-glyceroyl phosphate + ADP. The protein operates within carbohydrate degradation; glycolysis; pyruvate from D-glyceraldehyde 3-phosphate: step 2/5. In Beutenbergia cavernae (strain ATCC BAA-8 / DSM 12333 / CCUG 43141 / JCM 11478 / NBRC 16432 / NCIMB 13614 / HKI 0122), this protein is Phosphoglycerate kinase.